Consider the following 389-residue polypeptide: Cellobiose 2-epimerase (389 aa).

Belongs to the cellobiose 2-epimerase family.

The catalysed reaction is D-cellobiose = beta-D-glucosyl-(1-&gt;4)-D-mannopyranose. In terms of biological role, catalyzes the reversible epimerization of cellobiose to 4-O-beta-D-glucopyranosyl-D-mannose (Glc-Man). In Ruminococcus albus (strain ATCC 27210 / DSM 20455 / JCM 14654 / NCDO 2250 / 7), this protein is Cellobiose 2-epimerase.